The sequence spans 286 residues: Beta-glucanase (286 aa).

A signal peptide spans 1-30; the sequence is MCTMPLMKLKKMMRRTAFLLSVLIGCSMLG. One can recognise a GH16 domain in the interval 48–286; it reads FDYSGLPDPE…DYVRVYRWVE (239 aa). Glu-158 serves as the catalytic Nucleophile. The active-site Proton donor is Glu-163.

It belongs to the glycosyl hydrolase 16 family.

The catalysed reaction is Hydrolysis of (1-&gt;4)-beta-D-glucosidic linkages in beta-D-glucans containing (1-&gt;3)- and (1-&gt;4)-bonds.. Functionally, shows activity on lichenan, beta-glucan and laminarin but not on CMC cellulose or xylan. This Rhodothermus marinus (Rhodothermus obamensis) protein is Beta-glucanase (bglA).